Reading from the N-terminus, the 344-residue chain is Ribosomal RNA large subunit methyltransferase Cfr (344 aa).

The active-site Proton acceptor is the glutamate 90. Residues 97–330 form the Radical SAM core domain; the sequence is KQGWESFCIS…ATVRTQFGSE (234 aa). Cysteines 104 and 335 form a disulfide. Cysteine 111, cysteine 115, and cysteine 118 together coordinate [4Fe-4S] cluster. S-adenosyl-L-methionine contacts are provided by residues 157 to 158, serine 188, 211 to 213, and asparagine 292; these read GE and SLH. The active-site S-methylcysteine intermediate is cysteine 335.

This sequence belongs to the radical SAM superfamily. RlmN family. Cfr subfamily. It depends on [4Fe-4S] cluster as a cofactor.

Its subcellular location is the cytoplasm. It catalyses the reaction adenosine(2503) in 23S rRNA + 2 reduced [2Fe-2S]-[ferredoxin] + 2 S-adenosyl-L-methionine = 8-methyladenosine(2503) in 23S rRNA + 5'-deoxyadenosine + L-methionine + 2 oxidized [2Fe-2S]-[ferredoxin] + S-adenosyl-L-homocysteine. Specifically methylates position 8 of adenine 2503 in 23S rRNA. Confers resistance to some classes of antibiotics. This is Ribosomal RNA large subunit methyltransferase Cfr from Clostridium botulinum (strain Langeland / NCTC 10281 / Type F).